Consider the following 432-residue polypeptide: Enolase (432 aa).

Residue glutamine 164 participates in (2R)-2-phosphoglycerate binding. Glutamate 206 serves as the catalytic Proton donor. Aspartate 243, glutamate 284, and aspartate 311 together coordinate Mg(2+). 4 residues coordinate (2R)-2-phosphoglycerate: lysine 336, arginine 365, serine 366, and lysine 387. Lysine 336 functions as the Proton acceptor in the catalytic mechanism.

It belongs to the enolase family. The cofactor is Mg(2+).

Its subcellular location is the cytoplasm. It localises to the secreted. It is found in the cell surface. It catalyses the reaction (2R)-2-phosphoglycerate = phosphoenolpyruvate + H2O. The protein operates within carbohydrate degradation; glycolysis; pyruvate from D-glyceraldehyde 3-phosphate: step 4/5. In terms of biological role, catalyzes the reversible conversion of 2-phosphoglycerate (2-PG) into phosphoenolpyruvate (PEP). It is essential for the degradation of carbohydrates via glycolysis. This chain is Enolase, found in Synechococcus sp. (strain JA-3-3Ab) (Cyanobacteria bacterium Yellowstone A-Prime).